Here is a 905-residue protein sequence, read N- to C-terminus: MTTLDHVIATHQSEWVSFNEEPPFPAHSQGGTEEHLPGLSSSPDQSESSSGENHVVDGGSQDHSHSEQDDSSEKMGLISEAASPPGSPEQPPPDLASAISNWVQFEDDTPWASTSPPHQETAETALPLTMPCWTCPSFDSLGRCPLTSESSWTTHSEDTSSPSFGCSYTDLQLINAEEQTSGQASGADSTDNSSSLQEDEEVEMEAISWQASSPAMNGHPAPPVTSARFPSWVTFDDNEVSCPLPPVTSPLKPNTPPSASVIPDVPYNSMGSFKKRDRPKSTLMNFSKVQKLDISSLNRTPSVTEASPWRATNPFLNETLQDVQPSPINPFSAFFEEQERRSQNSSISSTTGKSQRDSLIVIYQDAISFDDSSKTQSHSDAVEKLKQLQIDDPDHFGSATLPDDDPVAWIELDAHPPGSARSQPRDGWPMMLRIPEKKNIMSSRHWGPIFVKLTDTGYLQLYYEQGLEKPFREFKLEICHEISEPRLQNYDENGRIHSLRIDRVTYKEKKKYQPKPAVAHTAEREQVIKLGTTNYDDFLSFIHAVQDRLMDLPVLSMDLSTVGLNYLEEEITVDVRDEFSGIVSKGDNQILQHHVLTRIHILSFLSGLAECRLGLNDILVKGNEIVLRQDIMPTTTTKWIKLHECRFHGCVDEDVFHNSRVILFNPLDACRFELMRFRTVFAEKTLPFTLRTATSVNGAEVEVQSWLRMSTGFSANRDPLTQVPCENVMIRYPVPSEWVKNFRRESVLGEKSLKAKVNRGASFGSTSVSGSEPVMRVTLGTAKYEHAFNSIVWRINRLPDKNSASGHPHCFFCHLELGSDREVPSRFANHVNVEFSMPTTSASKASVRSISVEDKTDVRKWVNYSAHYSYQVALGSIWLMLPTPFVHPTTLPLLFLLAMLTMFAW.

Disordered regions lie at residues 1–121, 178–205, and 244–263; these read MTTL…HQET, EQTS…VEME, and LPPV…SVIP. The segment covering 40-50 has biased composition (low complexity); that stretch reads SSSPDQSESSS. Basic and acidic residues predominate over residues 60 to 73; it reads SQDHSHSEQDDSSE. The span at 85–94 shows a compositional bias: pro residues; that stretch reads PGSPEQPPPD. Residues 178-196 are compositionally biased toward polar residues; it reads EQTSGQASGADSTDNSSSL. Residues 244–256 show a composition bias toward pro residues; the sequence is LPPVTSPLKPNTP. Threonine 255 bears the Phosphothreonine mark. A phosphoserine mark is found at serine 281, serine 287, and serine 302. 2 short sequence motifs (NPF) span residues 313–315 and 329–331; these read NPF. Residues 427 to 560 enclose the SHD domain; the sequence is GWPMMLRIPE…DLPVLSMDLS (134 aa). Residues 568–878 form the MHD domain; it reads EEEITVDVRD…SYQVALGSIW (311 aa). Serine 762 is subject to Phosphoserine.

The protein belongs to the Stoned B family. As to quaternary structure, interacts with the second C2 domain of synaptotagmins SYT1 and SYT2. Interacts with EPS15, EPS15R and ITSN1. Interacts indirectly with the AP-2 adapter complex. Interacts with TOR1A and COPS4; the interaction controls STON2 protein stability. Post-translationally, phosphorylated in vitro by PKD. In terms of processing, neddylated; deneddylated via its interaction with the COP9 signalosome (CSN) complex through TOR1A and COPS4. Ubiquitinated; leading to its degradation. Ubiquitous.

Its subcellular location is the cytoplasm. It is found in the membrane. The protein localises to the synapse. It localises to the synaptosome. Adapter protein involved in endocytic machinery. Involved in the synaptic vesicle recycling. May facilitate clathrin-coated vesicle uncoating. This Homo sapiens (Human) protein is Stonin-2 (STON2).